The primary structure comprises 681 residues: MGTLHGEKTMFASPNTFYIDESKLCFNKTHFNREDFNVERFMNLARQKSDLKTIQQDLRLYLKSVQNSMIELINDDYADFVHLSSNLVSLQDSLNKIEQDINRIWDEFKESTRESVGMAERIEQKCDELCSNREKQIEIRDRIYFLVAIEKLSEMLLHPPRKCSALWLQKAASFASELKGSTFPHSEEENAAEKIILSQLEAVLCAEGVRSAAGDCQNLPLIYSILSLTESTHSLTALLVSDLLYAEFVNEKHDESNQLKLLKQVFESVKKMRETWAEKMGTEHFRGNIRRFLDETLLTFILTFIDKCMGAVAVPSDTRLFHECFLLTQEFIDNWPSSHTCRAMLKSIRDKFNLLVYFKLETHRFGKQCDQLMSPEMFAEPETSENRENTPQLHCGVSRAIITAIEHVWSDDVYLPPIVDKLWDFTLKLLLKHFSWSQTMKNYFMEEKRDWTSMVTLRSDTGNLHQLVFDFALESIWGKFHDITVDTAPFGQCLTKHGRSIDSLCVQIDDSIIEMFSEVLHQEIAQVSDVPKQYRWTKKSPPTTHSKYVVTAIEMVENLKEKLCCEEHPHTDEIVRKVNLSAFNYFVGKGNEVLDSVEATGSSLSRFKRKTTTDSGSTVTDDDKIKQQIYHDAKYFLSYAENLVFSQADLTGLQEVVNRFDKDARSAIVQEKNQNEEAGNA.

It belongs to the COG2 family. Component of the conserved oligomeric Golgi complex which is composed of eight different subunits and is required for normal Golgi morphology and localization.

It localises to the golgi apparatus membrane. Its function is as follows. Required for normal Golgi morphology and function. This chain is Conserved oligomeric Golgi complex subunit 2 (cogc-2), found in Caenorhabditis elegans.